A 312-amino-acid chain; its full sequence is Ribosomal protein L11 methyltransferase (312 aa).

S-adenosyl-L-methionine contacts are provided by threonine 162, glycine 183, aspartate 205, and asparagine 248.

Belongs to the methyltransferase superfamily. PrmA family.

Its subcellular location is the cytoplasm. The enzyme catalyses L-lysyl-[protein] + 3 S-adenosyl-L-methionine = N(6),N(6),N(6)-trimethyl-L-lysyl-[protein] + 3 S-adenosyl-L-homocysteine + 3 H(+). Its function is as follows. Methylates ribosomal protein L11. This Bacillus cereus (strain ATCC 10987 / NRS 248) protein is Ribosomal protein L11 methyltransferase.